The primary structure comprises 365 residues: MSKKTVVVGLSGGVDSSVAALLLKQQGWNVIGLFMKNWEDDDTEEYCSSRQDLIDVMSVADKIGIDVEVVNFAAEYRERVFAEFLSEYQAGRTPNPDILCNSEIKFKAFLDHAMQLGAEKIATGHYAGVREFDGKFQLLKAEDGTKDQSYFLYRLNQAQLSKTLFPLADIYKRDVRKIAEAEGLHVAAKKDSTGICFIGERPFKDFLSRYLPPKKGEIRRLDDGKVMGEHDGLMFHTMGQRKGLHIGGIKEKGHPGGGDHDAWFVAGKDMEKNVLYVVQGHDHPALLKGDLVAEQLSWVSGNEPHTHWVYTAKPRYRTSDQPCEVERVDAESCEIRFAEPQWALTPGQSVVLYESRVCLGGGVIR.

Residues 9–16 (GLSGGVDS) and Met35 each bind ATP. Residues 95–97 (NPD) form an interaction with target base in tRNA region. Cys100 functions as the Nucleophile in the catalytic mechanism. A disulfide bridge links Cys100 with Cys196. Gly124 is an ATP binding site. The segment at 146 to 148 (KDQ) is interaction with tRNA. The active-site Cysteine persulfide intermediate is the Cys196. Residues 315-316 (RY) are interaction with tRNA.

Belongs to the MnmA/TRMU family.

The protein localises to the cytoplasm. The enzyme catalyses S-sulfanyl-L-cysteinyl-[protein] + uridine(34) in tRNA + AH2 + ATP = 2-thiouridine(34) in tRNA + L-cysteinyl-[protein] + A + AMP + diphosphate + H(+). Catalyzes the 2-thiolation of uridine at the wobble position (U34) of tRNA, leading to the formation of s(2)U34. The polypeptide is tRNA-specific 2-thiouridylase MnmA (Dechloromonas aromatica (strain RCB)).